The primary structure comprises 126 residues: Glycine cleavage system H protein (126 aa).

The region spanning 23 to 105 (AATVGITDHA…YGEGWLLRVR (83 aa)) is the Lipoyl-binding domain. At lysine 64 the chain carries N6-lipoyllysine.

The protein belongs to the GcvH family. In terms of assembly, the glycine cleavage system is composed of four proteins: P, T, L and H. It depends on (R)-lipoate as a cofactor.

Its function is as follows. The glycine cleavage system catalyzes the degradation of glycine. The H protein shuttles the methylamine group of glycine from the P protein to the T protein. In Rubrobacter xylanophilus (strain DSM 9941 / JCM 11954 / NBRC 16129 / PRD-1), this protein is Glycine cleavage system H protein.